The primary structure comprises 492 residues: 2-succinylbenzoate--CoA ligase (492 aa).

This sequence belongs to the ATP-dependent AMP-binding enzyme family. MenE subfamily.

It catalyses the reaction 2-succinylbenzoate + ATP + CoA = 2-succinylbenzoyl-CoA + AMP + diphosphate. Its pathway is quinol/quinone metabolism; 1,4-dihydroxy-2-naphthoate biosynthesis; 1,4-dihydroxy-2-naphthoate from chorismate: step 5/7. It functions in the pathway quinol/quinone metabolism; menaquinone biosynthesis. In terms of biological role, converts 2-succinylbenzoate (OSB) to 2-succinylbenzoyl-CoA (OSB-CoA). This is 2-succinylbenzoate--CoA ligase from Staphylococcus aureus (strain bovine RF122 / ET3-1).